A 646-amino-acid chain; its full sequence is Epithelial sodium channel subunit beta-2 (646 aa).

The Cytoplasmic segment spans residues 1-57 (MIQGKLKRLKRYFTRALHRIQKGPGYTYKELLVWFCDNTNTHGPKRIIKEGPKKRVM). Residues 58–78 (WFILTLVFAGLVFWQWGLLIL) traverse the membrane as a helical segment. Over 79–551 (TYLSYGVSVS…GGQFGFWMGG (473 aa)) the chain is Extracellular. 8 disulfides stabilise this stretch: cysteine 104/cysteine 290, cysteine 214/cysteine 221, cysteine 267/cysteine 274, cysteine 380/cysteine 467, cysteine 405/cysteine 463, cysteine 409/cysteine 459, cysteine 418/cysteine 445, and cysteine 420/cysteine 434. The chain crosses the membrane as a helical span at residues 552-572 (SVLCIIEFGEIIIDCMWITIL). Over 573-646 (KLLAWIRNRR…IEPVSSDEEN (74 aa)) the chain is Cytoplasmic. Residues 586–646 (QRPQYADPPP…IEPVSSDEEN (61 aa)) form a disordered region. Residues 610-619 (QHDDGNHVTE) show a composition bias toward basic and acidic residues.

It belongs to the amiloride-sensitive sodium channel (TC 1.A.6) family. SCNN1B subfamily. Component of the heterotrimeric epithelial sodium channel (ENaC) composed of an alpha/SCNN1A, a beta/SCNN1B and a gamma/SCNN1G subunit.

The protein resides in the apical cell membrane. It localises to the cytoplasmic vesicle membrane. The catalysed reaction is Na(+)(in) = Na(+)(out). Its activity is regulated as follows. Originally identified and characterized by its inhibition by the diuretic drug amiloride. This is one of the three pore-forming subunits of the heterotrimeric epithelial sodium channel (ENaC), a critical regulator of sodium balance and fluid homeostasis. ENaC operates in epithelial tissues, where it mediates the electrodiffusion of sodium ions from extracellular fluid through the apical membrane of cells, with water following osmotically. The chain is Epithelial sodium channel subunit beta-2 (scnn1b-b) from Xenopus laevis (African clawed frog).